Here is a 332-residue protein sequence, read N- to C-terminus: Phosphoribosylformylglycinamidine cyclo-ligase (332 aa).

It belongs to the AIR synthase family.

It localises to the cytoplasm. It carries out the reaction 2-formamido-N(1)-(5-O-phospho-beta-D-ribosyl)acetamidine + ATP = 5-amino-1-(5-phospho-beta-D-ribosyl)imidazole + ADP + phosphate + H(+). The protein operates within purine metabolism; IMP biosynthesis via de novo pathway; 5-amino-1-(5-phospho-D-ribosyl)imidazole from N(2)-formyl-N(1)-(5-phospho-D-ribosyl)glycinamide: step 2/2. This is Phosphoribosylformylglycinamidine cyclo-ligase from Clostridium acetobutylicum (strain ATCC 824 / DSM 792 / JCM 1419 / IAM 19013 / LMG 5710 / NBRC 13948 / NRRL B-527 / VKM B-1787 / 2291 / W).